Reading from the N-terminus, the 131-residue chain is Profilin-2 (131 aa).

Belongs to the profilin family. As to quaternary structure, occurs in many kinds of cells as a complex with monomeric actin in a 1:1 ratio. As to expression, expressed in vascular bundles of roots, hypocotyls, cotyledons, leaves, sepals, petals, stamen filaments and stalks of developing seeds. Expressed in leaf epidermal cells, trichomes and stem epidermal cells. Detected in phloem exudates (at protein level).

It localises to the cytoplasm. Its subcellular location is the cytoskeleton. The protein localises to the endoplasmic reticulum. It is found in the cytosol. The protein resides in the nucleus. Its function is as follows. Binds to actin monomers and regulates the organization of the actin cytoskeleton. At high concentrations, profilin prevents the polymerization of actin, whereas it enhances it at low concentrations. At low concentrations, associates with the poly-proline motif of formins to enhance actin filament elongation rate. Binds G-actin and poly-L-proline with low affinity in vitro. Binds ACT1, ACT7 and ACT11 and inhibits actin polymerization. May be involved in the cross-talk between vesicular trafficking and the actin cytoskeleton. Inhibits cell growth of various pathogenic fungal strains. May play a role as antifungal proteins in the defense system against fungal pathogen attacks. This Arabidopsis thaliana (Mouse-ear cress) protein is Profilin-2.